The primary structure comprises 117 residues: Large ribosomal subunit protein bL20c (117 aa).

This sequence belongs to the bacterial ribosomal protein bL20 family.

It is found in the plastid. The protein localises to the chloroplast. Functionally, binds directly to 23S ribosomal RNA and is necessary for the in vitro assembly process of the 50S ribosomal subunit. It is not involved in the protein synthesizing functions of that subunit. The sequence is that of Large ribosomal subunit protein bL20c from Arabis hirsuta (Hairy rock-cress).